The following is a 141-amino-acid chain: Hemoglobin subunit alpha (141 aa).

The region spanning 1-141 (VLSAADKSNV…VSTVLTSKYR (141 aa)) is the Globin domain. At serine 3 the chain carries Phosphoserine. An N6-succinyllysine mark is found at lysine 7 and lysine 11. Lysine 16 is modified (N6-acetyllysine; alternate). Lysine 16 is modified (N6-succinyllysine; alternate). Phosphotyrosine is present on tyrosine 24. Residue serine 35 is modified to Phosphoserine. An N6-succinyllysine modification is found at lysine 40. Serine 49 bears the Phosphoserine mark. Residue histidine 58 participates in O2 binding. Histidine 87 is a binding site for heme b. Position 102 is a phosphoserine (serine 102). The residue at position 108 (threonine 108) is a Phosphothreonine. Phosphoserine is present on serine 124. A phosphothreonine mark is found at threonine 134 and threonine 137. Residue serine 138 is modified to Phosphoserine.

Belongs to the globin family. In terms of assembly, heterotetramer of two alpha chains and two beta chains. Red blood cells.

Its function is as follows. Involved in oxygen transport from the lung to the various peripheral tissues. Functionally, hemopressin acts as an antagonist peptide of the cannabinoid receptor CNR1. Hemopressin-binding efficiently blocks cannabinoid receptor CNR1 and subsequent signaling. The chain is Hemoglobin subunit alpha (HBA) from Felis catus (Cat).